The chain runs to 229 residues: Ferric nitrobindin-like protein (229 aa).

The interval methionine 1–aspartate 54 is disordered. Low complexity predominate over residues aspartate 18 to alanine 33. The GXWXGXG motif lies at glycine 82–glycine 88.

The protein belongs to the nitrobindin family.

The polypeptide is Ferric nitrobindin-like protein (Corynebacterium glutamicum (strain R)).